We begin with the raw amino-acid sequence, 320 residues long: Pantothenate kinase (320 aa).

96–103 (GSVAVGKS) contributes to the ATP binding site.

The protein belongs to the prokaryotic pantothenate kinase family.

The protein localises to the cytoplasm. The catalysed reaction is (R)-pantothenate + ATP = (R)-4'-phosphopantothenate + ADP + H(+). The protein operates within cofactor biosynthesis; coenzyme A biosynthesis; CoA from (R)-pantothenate: step 1/5. The sequence is that of Pantothenate kinase from Brevibacillus brevis (strain 47 / JCM 6285 / NBRC 100599).